We begin with the raw amino-acid sequence, 275 residues long: Rhamnulose-1-phosphate aldolase (275 aa).

The active site involves E117. The Zn(2+) site is built by H141, H143, and H212.

This sequence belongs to the aldolase class II family. RhaD subfamily. In terms of assembly, homotetramer. Requires Zn(2+) as cofactor.

It is found in the cytoplasm. The catalysed reaction is L-rhamnulose 1-phosphate = (S)-lactaldehyde + dihydroxyacetone phosphate. It participates in carbohydrate degradation; L-rhamnose degradation; glycerone phosphate from L-rhamnose: step 3/3. Catalyzes the reversible cleavage of L-rhamnulose-1-phosphate to dihydroxyacetone phosphate (DHAP) and L-lactaldehyde. This Salmonella paratyphi C (strain RKS4594) protein is Rhamnulose-1-phosphate aldolase.